Reading from the N-terminus, the 80-residue chain is Exodeoxyribonuclease 7 small subunit (80 aa).

This sequence belongs to the XseB family. As to quaternary structure, heterooligomer composed of large and small subunits.

The protein resides in the cytoplasm. It carries out the reaction Exonucleolytic cleavage in either 5'- to 3'- or 3'- to 5'-direction to yield nucleoside 5'-phosphates.. In terms of biological role, bidirectionally degrades single-stranded DNA into large acid-insoluble oligonucleotides, which are then degraded further into small acid-soluble oligonucleotides. The protein is Exodeoxyribonuclease 7 small subunit of Escherichia coli O6:K15:H31 (strain 536 / UPEC).